Consider the following 296-residue polypeptide: GTPase Era (296 aa).

The Era-type G domain occupies 7–174; the sequence is KCSMNAIVGT…INYLCEISPS (168 aa). A G1 region spans residues 15-22; that stretch reads GTTNAGKS. 15 to 22 provides a ligand contact to GTP; sequence GTTNAGKS. Residues 41–45 are G2; it reads QTTRV. Residues 62–65 are G3; the sequence is DTPG. Residues 62-66 and 124-127 contribute to the GTP site; these read DTPGI and NKID. A G4 region spans residues 124–127; sequence NKID. The interval 153–155 is G5; that stretch reads ISA. The KH type-2 domain occupies 205-282; the sequence is LHHELPYSLS…HLFLFVKVRE (78 aa).

This sequence belongs to the TRAFAC class TrmE-Era-EngA-EngB-Septin-like GTPase superfamily. Era GTPase family. In terms of assembly, monomer.

It is found in the cytoplasm. It localises to the cell inner membrane. An essential GTPase that binds both GDP and GTP, with rapid nucleotide exchange. Plays a role in 16S rRNA processing and 30S ribosomal subunit biogenesis and possibly also in cell cycle regulation and energy metabolism. This is GTPase Era from Ehrlichia canis (strain Jake).